Consider the following 70-residue polypeptide: Protein FlmC homolog (70 aa).

The tract at residues 1-21 (MSSPHQDSLLPRFAQGEEGHE) is disordered.

The polypeptide is Protein FlmC homolog (Escherichia coli).